The sequence spans 814 residues: Tax1-binding protein 1 homolog (814 aa).

Phosphoserine occurs at positions 124, 138, and 225. Residues 144–623 (TTKAGLLELK…KELTKSLEDQ (480 aa)) adopt a coiled-coil conformation. The tract at residues 320–420 (EEISKLQSCL…ELQLHAVKKD (101 aa)) is oligomerization. At serine 619 the chain carries Phosphoserine; by IKKA. A Phosphoserine modification is found at serine 632. Serine 693 carries the phosphoserine; by IKKA modification. Residues 701–733 (SQPARNLSRPDGLEDPEDSREDENVPIPPDPAN) are disordered. 2 consecutive UBZ1-type zinc fingers follow at residues 752-778 (HKKC…VESH) and 779-805 (WKVC…VQTH). Residues cysteine 755, cysteine 758, histidine 774, histidine 778, cysteine 782, cysteine 785, histidine 801, and histidine 805 each contribute to the Zn(2+) site.

As to quaternary structure, homooligomer. Interacts with TNFAIP3. Interacts with STARD13. Interacts with MYO6. Interacts with TOM1; the interaction is indirect and is mediated by MYO6, which acts as a bridge between TOM1 and TAX1BP1. Interacts with MAVS; this interaction induces MAVS polyubiquitination. Interacts with TNIP1. Interacts with TRAF6; this interaction mediates deubiquitination of TRAF6 and inhibition of NF-kappa-B activation. Interacts with RIPK1; this interaction negatively regulates RIPK1 ubiquitination. Interacts with NBR1. Interacts with TBK1. Interacts with RB1CC1. Interacts with SQSTM1. Interacts with AZI2. Interacts with TICAM1 and TRIM32; these interactions target TICAM1 to TAX1BP1-mediated selective autophagic degradation. Post-translationally, phosphorylated in the C-terminal region by CHUK/IKKA leading to NF-kappa-B signaling down-regulation.

It localises to the cytoplasm. The protein resides in the mitochondrion. The protein localises to the preautophagosomal structure. It is found in the cytoplasmic vesicle. Its subcellular location is the autophagosome. Functionally, ubiquitin-binding adapter that participates in inflammatory, antiviral and innate immune processes as well as selective autophagy regulation. Plays a key role in the negative regulation of NF-kappa-B and IRF3 signalings by acting as an adapter for the ubiquitin-editing enzyme A20/TNFAIP3 to bind and inactivate its substrates. Disrupts the interactions between the E3 ubiquitin ligase TRAF3 and TBK1/IKBKE to attenuate 'Lys63'-linked polyubiquitination of TBK1 and thereby IFN-beta production. Also recruits A20/TNFAIP3 to ubiquitinated signaling proteins TRAF6 and RIPK1, leading to their deubiquitination and disruption of IL-1 and TNF-induced NF-kappa-B signaling pathways. Inhibits virus-induced apoptosis by inducing the 'Lys-48'-linked polyubiquitination and degradation of MAVS via recruitment of the E3 ligase ITCH, thereby attenuating MAVS-mediated apoptosis signaling. As a macroautophagy/autophagy receptor, facilitates the xenophagic clearance of pathogenic bacteria such as Salmonella typhimurium and Mycobacterium tuberculosis. Upon NBR1 recruitment to the SQSTM1-ubiquitin condensates, acts as the major recruiter of RB1CC1 to these ubiquitin condensates to promote their autophagic degradation. Mediates the autophagic degradation of other substrates including TICAM1. This is Tax1-binding protein 1 homolog (Tax1bp1) from Mus musculus (Mouse).